We begin with the raw amino-acid sequence, 271 residues long: Ribosomal RNA small subunit methyltransferase A (271 aa).

S-adenosyl-L-methionine-binding residues include N28, L30, G54, E75, D99, and N117.

Belongs to the class I-like SAM-binding methyltransferase superfamily. rRNA adenine N(6)-methyltransferase family. RsmA subfamily.

The protein localises to the cytoplasm. The catalysed reaction is adenosine(1518)/adenosine(1519) in 16S rRNA + 4 S-adenosyl-L-methionine = N(6)-dimethyladenosine(1518)/N(6)-dimethyladenosine(1519) in 16S rRNA + 4 S-adenosyl-L-homocysteine + 4 H(+). In terms of biological role, specifically dimethylates two adjacent adenosines (A1518 and A1519) in the loop of a conserved hairpin near the 3'-end of 16S rRNA in the 30S particle. May play a critical role in biogenesis of 30S subunits. This Thermus thermophilus (strain ATCC 27634 / DSM 579 / HB8) protein is Ribosomal RNA small subunit methyltransferase A.